Reading from the N-terminus, the 187-residue chain is Adenylate kinase (187 aa).

Position 10 to 15 (10 to 15) interacts with ATP; sequence GSGKGT. The NMP stretch occupies residues 30–59; it reads STGDLLRAEVAAGSPLGLKAKEVMARGDLV. AMP is bound by residues T31, R36, 57-59, 85-88, and Q92; these read DLV and GYPR. Residues 126–136 are LID; it reads GRAKAEGREDD. R127 provides a ligand contact to ATP. The AMP site is built by R133 and R144. G172 contacts ATP.

This sequence belongs to the adenylate kinase family. In terms of assembly, monomer.

The protein resides in the cytoplasm. The catalysed reaction is AMP + ATP = 2 ADP. Its pathway is purine metabolism; AMP biosynthesis via salvage pathway; AMP from ADP: step 1/1. Its function is as follows. Catalyzes the reversible transfer of the terminal phosphate group between ATP and AMP. Plays an important role in cellular energy homeostasis and in adenine nucleotide metabolism. The chain is Adenylate kinase from Xanthomonas axonopodis pv. citri (strain 306).